The chain runs to 267 residues: Taurine import ATP-binding protein TauB (267 aa).

Positions 6 to 238 (FNEASLIYPA…DILAGAPASE (233 aa)) constitute an ABC transporter domain. Residue 43 to 50 (GRSGSGKT) coordinates ATP.

Belongs to the ABC transporter superfamily. Taurine importer (TC 3.A.1.17.1) family. The complex is composed of two ATP-binding proteins (TauB), two transmembrane proteins (TauC) and a solute-binding protein (TauA).

The protein localises to the cell inner membrane. The catalysed reaction is taurine(out) + ATP + H2O = taurine(in) + ADP + phosphate + H(+). Part of the ABC transporter complex TauABC involved in taurine import. Responsible for energy coupling to the transport system. This chain is Taurine import ATP-binding protein TauB, found in Sinorhizobium fredii (strain NBRC 101917 / NGR234).